Reading from the N-terminus, the 271-residue chain is MSSIAKSARIHKLAVVEDGAVIGENVVVGPFCHVGPKVVLHDSVQLLTHVVVTGRTTIGKGTKIFPMAVVGGDPQSVHHGGEETTLDIGENCTIREGVTINTGTADYGGKTVVGNNNLFLANSHVAHDCRVGNNVIMSNNVMLAGHVTVEDRAILGGGCAVHQFTRIGRQAFVGGLSAASYDVIPYGMLNGNPGVLSGLNIVGMTRAGIERSVIHRVRRAYKSIFEGEGSIRDNATAIREEYADCKEAMEILDFIAADSDRALSSPNRGKG.

It belongs to the transferase hexapeptide repeat family. LpxA subfamily. Homotrimer.

Its subcellular location is the cytoplasm. It catalyses the reaction a (3R)-hydroxyacyl-[ACP] + UDP-N-acetyl-alpha-D-glucosamine = a UDP-3-O-[(3R)-3-hydroxyacyl]-N-acetyl-alpha-D-glucosamine + holo-[ACP]. The protein operates within glycolipid biosynthesis; lipid IV(A) biosynthesis; lipid IV(A) from (3R)-3-hydroxytetradecanoyl-[acyl-carrier-protein] and UDP-N-acetyl-alpha-D-glucosamine: step 1/6. Its function is as follows. Involved in the biosynthesis of lipid A, a phosphorylated glycolipid that anchors the lipopolysaccharide to the outer membrane of the cell. This is Acyl-[acyl-carrier-protein]--UDP-N-acetylglucosamine O-acyltransferase from Rhizobium rhizogenes (strain K84 / ATCC BAA-868) (Agrobacterium radiobacter).